Reading from the N-terminus, the 122-residue chain is Large ribosomal subunit protein uL14 (122 aa).

This sequence belongs to the universal ribosomal protein uL14 family. In terms of assembly, part of the 50S ribosomal subunit. Forms a cluster with proteins L3 and L19. In the 70S ribosome, L14 and L19 interact and together make contacts with the 16S rRNA in bridges B5 and B8.

Binds to 23S rRNA. Forms part of two intersubunit bridges in the 70S ribosome. In Bacillus cytotoxicus (strain DSM 22905 / CIP 110041 / 391-98 / NVH 391-98), this protein is Large ribosomal subunit protein uL14.